The following is a 545-amino-acid chain: Chaperonin GroEL 1 (545 aa).

Residues 30–33 (TLGP), lysine 51, 87–91 (DGTTT), glycine 415, and aspartate 495 contribute to the ATP site.

This sequence belongs to the chaperonin (HSP60) family. As to quaternary structure, forms a cylinder of 14 subunits composed of two heptameric rings stacked back-to-back. Interacts with the co-chaperonin GroES.

It is found in the cytoplasm. The enzyme catalyses ATP + H2O + a folded polypeptide = ADP + phosphate + an unfolded polypeptide.. Together with its co-chaperonin GroES, plays an essential role in assisting protein folding. The GroEL-GroES system forms a nano-cage that allows encapsulation of the non-native substrate proteins and provides a physical environment optimized to promote and accelerate protein folding. The sequence is that of Chaperonin GroEL 1 from Sinorhizobium medicae (strain WSM419) (Ensifer medicae).